The sequence spans 92 residues: Acylphosphatase (92 aa).

In terms of domain architecture, Acylphosphatase-like spans 5 to 90; the sequence is TWRLVAHGRV…GEFAGFEFRP (86 aa). Active-site residues include Arg20 and Asn38.

This sequence belongs to the acylphosphatase family.

It carries out the reaction an acyl phosphate + H2O = a carboxylate + phosphate + H(+). The chain is Acylphosphatase (acyP) from Cupriavidus necator (strain ATCC 17699 / DSM 428 / KCTC 22496 / NCIMB 10442 / H16 / Stanier 337) (Ralstonia eutropha).